The sequence spans 895 residues: Catenin alpha-3 (895 aa).

The stretch at 74–107 (EMIAKEATVLKEELAAALQEVRKESKALKVSAER) forms a coiled coil. Ser160 bears the Phosphoserine mark. A coiled-coil region spans residues 325 to 379 (RERIIAECNAIRQALQDLLTEYMSNTGKTERSNTLNTAIVNMSKKTRDLRRQLRK). Thr361 carries the phosphothreonine modification. The segment at 635–660 (DVSDLEDDHEVRSHTSIQTEGKTDRA) is disordered. 2 positions are modified to phosphoserine: Ser637 and Ser647. The residue at position 649 (Thr649) is a Phosphothreonine.

The protein belongs to the vinculin/alpha-catenin family. As to quaternary structure, interacts with CTNNB1. Interacts with PKP2. In terms of tissue distribution, expressed in heart (at protein level).

Its subcellular location is the cytoplasm. It localises to the cytoskeleton. The protein localises to the cell junction. The protein resides in the desmosome. May be involved in formation of stretch-resistant cell-cell adhesion complexes. In Mus musculus (Mouse), this protein is Catenin alpha-3.